The sequence spans 125 residues: Large ribosomal subunit protein bL12 (125 aa).

This sequence belongs to the bacterial ribosomal protein bL12 family. Homodimer. Part of the ribosomal stalk of the 50S ribosomal subunit. Forms a multimeric L10(L12)X complex, where L10 forms an elongated spine to which 2 to 4 L12 dimers bind in a sequential fashion. Binds GTP-bound translation factors.

Functionally, forms part of the ribosomal stalk which helps the ribosome interact with GTP-bound translation factors. Is thus essential for accurate translation. In Rickettsia felis (strain ATCC VR-1525 / URRWXCal2) (Rickettsia azadi), this protein is Large ribosomal subunit protein bL12.